Here is a 338-residue protein sequence, read N- to C-terminus: RNA 3'-terminal phosphate cyclase (338 aa).

ATP-binding positions include Q103 and 283–287 (YLADQ). H308 serves as the catalytic Tele-AMP-histidine intermediate.

This sequence belongs to the RNA 3'-terminal cyclase family. Type 1 subfamily.

The protein localises to the cytoplasm. The catalysed reaction is a 3'-end 3'-phospho-ribonucleotide-RNA + ATP = a 3'-end 2',3'-cyclophospho-ribonucleotide-RNA + AMP + diphosphate. Its function is as follows. Catalyzes the conversion of 3'-phosphate to a 2',3'-cyclic phosphodiester at the end of RNA. The mechanism of action of the enzyme occurs in 3 steps: (A) adenylation of the enzyme by ATP; (B) transfer of adenylate to an RNA-N3'P to produce RNA-N3'PP5'A; (C) and attack of the adjacent 2'-hydroxyl on the 3'-phosphorus in the diester linkage to produce the cyclic end product. The biological role of this enzyme is unknown but it is likely to function in some aspects of cellular RNA processing. This is RNA 3'-terminal phosphate cyclase from Escherichia coli O6:H1 (strain CFT073 / ATCC 700928 / UPEC).